Here is a 147-residue protein sequence, read N- to C-terminus: Large ribosomal subunit protein uL11 (147 aa).

It belongs to the universal ribosomal protein uL11 family. As to quaternary structure, part of the ribosomal stalk of the 50S ribosomal subunit. Interacts with L10 and the large rRNA to form the base of the stalk. L10 forms an elongated spine to which L12 dimers bind in a sequential fashion forming a multimeric L10(L12)X complex. In terms of processing, one or more lysine residues are methylated.

Forms part of the ribosomal stalk which helps the ribosome interact with GTP-bound translation factors. This Bacteroides fragilis (strain ATCC 25285 / DSM 2151 / CCUG 4856 / JCM 11019 / LMG 10263 / NCTC 9343 / Onslow / VPI 2553 / EN-2) protein is Large ribosomal subunit protein uL11.